We begin with the raw amino-acid sequence, 101 residues long: MFVKKGDKVRVIAGKDKGVEAVVLKAFPKINKVVVEGVAIVKKHQKPNNENPQGAIVEKEAPIHVSNVQVLDKNGVAGRVGYKVVDGKKVRYNKKSGEVLD.

The protein belongs to the universal ribosomal protein uL24 family. Part of the 50S ribosomal subunit.

One of two assembly initiator proteins, it binds directly to the 5'-end of the 23S rRNA, where it nucleates assembly of the 50S subunit. Functionally, one of the proteins that surrounds the polypeptide exit tunnel on the outside of the subunit. This Streptococcus mutans serotype c (strain ATCC 700610 / UA159) protein is Large ribosomal subunit protein uL24.